Here is an 870-residue protein sequence, read N- to C-terminus: Histidine biosynthesis trifunctional protein (870 aa).

The phosphoribosyl-AMP cyclohydrolase stretch occupies residues 1-285 (METTLPLPFL…KFVVKQKGRF (285 aa)). Residues 286–367 (CHLDQSGCFG…FYFALTRAVA (82 aa)) are phosphoribosyl-ATP pyrophosphohydrolase. Positions 368–870 (AGVTLADIER…IRLEHMSKSN (503 aa)) are histidinol dehydrogenase. Zn(2+) is bound by residues Gln693 and His696. Catalysis depends on residues Glu762 and His763. The Zn(2+) site is built by Asp796 and His855.

The protein in the C-terminal section; belongs to the histidinol dehydrogenase family. Requires Zn(2+) as cofactor.

The catalysed reaction is 1-(5-phospho-beta-D-ribosyl)-5'-AMP + H2O = 1-(5-phospho-beta-D-ribosyl)-5-[(5-phospho-beta-D-ribosylamino)methylideneamino]imidazole-4-carboxamide. It carries out the reaction 1-(5-phospho-beta-D-ribosyl)-ATP + H2O = 1-(5-phospho-beta-D-ribosyl)-5'-AMP + diphosphate + H(+). It catalyses the reaction L-histidinol + 2 NAD(+) + H2O = L-histidine + 2 NADH + 3 H(+). Its pathway is amino-acid biosynthesis; L-histidine biosynthesis; L-histidine from 5-phospho-alpha-D-ribose 1-diphosphate: step 2/9. It participates in amino-acid biosynthesis; L-histidine biosynthesis; L-histidine from 5-phospho-alpha-D-ribose 1-diphosphate: step 3/9. The protein operates within amino-acid biosynthesis; L-histidine biosynthesis; L-histidine from 5-phospho-alpha-D-ribose 1-diphosphate: step 9/9. The chain is Histidine biosynthesis trifunctional protein (his-3) from Neurospora crassa (strain ATCC 24698 / 74-OR23-1A / CBS 708.71 / DSM 1257 / FGSC 987).